Here is a 240-residue protein sequence, read N- to C-terminus: 4-hydroxy-tetrahydrodipicolinate reductase (240 aa).

NAD(+) is bound at residue 7–12; that stretch reads GLSGTM. An NADP(+)-binding site is contributed by lysine 35. Residues 74 to 76 and 98 to 101 contribute to the NAD(+) site; these read GTT and ATNM. The Proton donor/acceptor role is filled by histidine 131. A (S)-2,3,4,5-tetrahydrodipicolinate-binding site is contributed by histidine 132. Lysine 135 functions as the Proton donor in the catalytic mechanism. 141–142 contributes to the (S)-2,3,4,5-tetrahydrodipicolinate binding site; it reads GS.

It belongs to the DapB family.

The protein localises to the cytoplasm. It carries out the reaction (S)-2,3,4,5-tetrahydrodipicolinate + NAD(+) + H2O = (2S,4S)-4-hydroxy-2,3,4,5-tetrahydrodipicolinate + NADH + H(+). The enzyme catalyses (S)-2,3,4,5-tetrahydrodipicolinate + NADP(+) + H2O = (2S,4S)-4-hydroxy-2,3,4,5-tetrahydrodipicolinate + NADPH + H(+). The protein operates within amino-acid biosynthesis; L-lysine biosynthesis via DAP pathway; (S)-tetrahydrodipicolinate from L-aspartate: step 4/4. In terms of biological role, catalyzes the conversion of 4-hydroxy-tetrahydrodipicolinate (HTPA) to tetrahydrodipicolinate. The polypeptide is 4-hydroxy-tetrahydrodipicolinate reductase (Alkaliphilus metalliredigens (strain QYMF)).